The following is a 153-amino-acid chain: Probable disulfide formation protein (153 aa).

Residues 4-23 (DTRLYLAWLVALAATLGSLY) traverse the membrane as a helical segment. Cys-33 and Cys-36 form a disulfide bridge. A run of 2 helical transmembrane segments spans residues 38 to 57 (AQRI…AFVG) and 64 to 81 (YVLP…FQNL). An intrachain disulfide couples Cys-93 to Cys-101. The helical transmembrane segment at 117-139 (RALTIPVLSMIAFALILALLSWP) threads the bilayer.

Belongs to the DsbB family. BdbC subfamily.

It is found in the cell membrane. Required for disulfide bond formation in some proteins. This is Probable disulfide formation protein from Deinococcus radiodurans (strain ATCC 13939 / DSM 20539 / JCM 16871 / CCUG 27074 / LMG 4051 / NBRC 15346 / NCIMB 9279 / VKM B-1422 / R1).